Here is a 102-residue protein sequence, read N- to C-terminus: MANEKIRIRLKAYDHRVLDQSAEKIVETAKRSGATVSGPIPLPTEKAIYTVLRAVHKYKDAREQFEMRTHKRLIDIVNPTPKTVDALMRLELPSGVDIEIKL.

It belongs to the universal ribosomal protein uS10 family. As to quaternary structure, part of the 30S ribosomal subunit.

Its function is as follows. Involved in the binding of tRNA to the ribosomes. The chain is Small ribosomal subunit protein uS10 from Exiguobacterium sibiricum (strain DSM 17290 / CCUG 55495 / CIP 109462 / JCM 13490 / 255-15).